Here is a 486-residue protein sequence, read N- to C-terminus: FAD-dependent oxidoreductase domain-containing protein 1 (486 aa).

Residues 62–82 (EHSDVVIVGGGVLGLSVAYWL) traverse the membrane as a helical segment.

In terms of assembly, associates with components of the mitochondrial respiratory chain complex I. The cofactor is FAD.

The protein resides in the mitochondrion inner membrane. Required for the assembly of the mitochondrial membrane respiratory chain NADH dehydrogenase (Complex I). Involved in mid-late stages of complex I assembly. The sequence is that of FAD-dependent oxidoreductase domain-containing protein 1 from Homo sapiens (Human).